We begin with the raw amino-acid sequence, 482 residues long: Rho GTPase-activating protein 15 (482 aa).

Serine 51, serine 111, serine 205, serine 208, and serine 250 each carry phosphoserine. A PH domain is found at 87–198 (MVEKEGYLQK…WFHAIKNAID (112 aa)). Positions 288 to 477 (SHLHTVCERE…FMLTEYDKIF (190 aa)) constitute a Rho-GAP domain.

Its subcellular location is the cytoplasm. It localises to the membrane. Functionally, GTPase activator for the Rho-type GTPases by converting them to an inactive GDP-bound state. Has activity toward RAC1. Overexpression results in an increase in actin stress fibers and cell contraction. The protein is Rho GTPase-activating protein 15 (Arhgap15) of Rattus norvegicus (Rat).